The following is a 262-amino-acid chain: uncharacterized protein (262 aa).

The BTB domain occupies 5–107 (PLISLDVEGV…MIEHKLRTFC (103 aa)). Residues 182 to 195 (ISLPRNFTHIAHVG) form the CRIB domain.

This is an uncharacterized protein from Caenorhabditis elegans.